The primary structure comprises 208 residues: Probable nicotinate-nucleotide adenylyltransferase (208 aa).

It belongs to the NadD family.

It carries out the reaction nicotinate beta-D-ribonucleotide + ATP + H(+) = deamido-NAD(+) + diphosphate. It functions in the pathway cofactor biosynthesis; NAD(+) biosynthesis; deamido-NAD(+) from nicotinate D-ribonucleotide: step 1/1. Catalyzes the reversible adenylation of nicotinate mononucleotide (NaMN) to nicotinic acid adenine dinucleotide (NaAD). This chain is Probable nicotinate-nucleotide adenylyltransferase, found in Trichormus variabilis (strain ATCC 29413 / PCC 7937) (Anabaena variabilis).